We begin with the raw amino-acid sequence, 204 residues long: 8-oxoguanine DNA glycosylase/AP lyase (204 aa).

Residues lysine 128 and aspartate 146 contribute to the active site.

Belongs to the type-2 OGG1 family.

It carries out the reaction 2'-deoxyribonucleotide-(2'-deoxyribose 5'-phosphate)-2'-deoxyribonucleotide-DNA = a 3'-end 2'-deoxyribonucleotide-(2,3-dehydro-2,3-deoxyribose 5'-phosphate)-DNA + a 5'-end 5'-phospho-2'-deoxyribonucleoside-DNA + H(+). Catalyzes the excision of an oxidatively damaged form of guanine (7,8-dihydro-8-oxoguanine = 8-oxoG) from DNA. Also cleaves the DNA backbone at apurinic/apyrimidinic sites (AP sites). The protein is 8-oxoguanine DNA glycosylase/AP lyase of Sulfurisphaera tokodaii (strain DSM 16993 / JCM 10545 / NBRC 100140 / 7) (Sulfolobus tokodaii).